A 241-amino-acid chain; its full sequence is PRA1 family protein H (241 aa).

Transmembrane regions (helical) follow at residues 142 to 162 (LFIVFFACALYQMPLALVGLL), 189 to 205 (LSIGIGQCATAVLLTFL), and 209 to 228 (MALFSALAISYSVMILHAGF).

Belongs to the PRA1 family.

The protein resides in the endoplasmic reticulum membrane. May be involved in both secretory and endocytic intracellular trafficking in the endosomal/prevacuolar compartments. In Arabidopsis thaliana (Mouse-ear cress), this protein is PRA1 family protein H (PRA1H).